Reading from the N-terminus, the 270-residue chain is Urease accessory protein UreD (270 aa).

This sequence belongs to the UreD family. UreD, UreF and UreG form a complex that acts as a GTP-hydrolysis-dependent molecular chaperone, activating the urease apoprotein by helping to assemble the nickel containing metallocenter of UreC. The UreE protein probably delivers the nickel.

Its subcellular location is the cytoplasm. Required for maturation of urease via the functional incorporation of the urease nickel metallocenter. The chain is Urease accessory protein UreD from Beijerinckia indica subsp. indica (strain ATCC 9039 / DSM 1715 / NCIMB 8712).